The primary structure comprises 1059 residues: WD repeat-containing protein on Y chromosome (1059 aa).

WD repeat units lie at residues 121–161 (DFCP…ALTA), 170–209 (RSKTWVLDTVPLPDLSMFCVTGLETELRLYNVVAACFTLK), 214–256 (RLPQ…KVTT), 344–383 (CVPRGVTCFAFEPSNELLVSGGPDCDLRLWDIHRPEKPSV), 387–426 (GHTSSITFLFLQDAGEKIYSLDQRKIIKVWDVRNRVLLQT), 476–515 (SHTKPVSVLLYNGLYRLVVSCGFDSFIIVWDHRVNRKMTI), 528–567 (LEPVEITAACFDGKEQMLLTGARNGSLKIWNIGGRTCMRT), 616–658 (QHSD…RRYD), 714–759 (MRQL…GFKG), 766–805 (MAGDRIITLATDKANRFLFTGTALGYVKTWYIENCWIPNE), and 849–888 (AHRACVTGLTYLDDTGLLLSCSSDRTVRLWTLGGRYIGLL).

The chain is WD repeat-containing protein on Y chromosome from Anopheles gambiae (African malaria mosquito).